Consider the following 348-residue polypeptide: Methylthioribose-1-phosphate isomerase (348 aa).

Residues 48–50 (RGA), R90, and Q195 each bind substrate. D236 functions as the Proton donor in the catalytic mechanism. 246-247 (NK) is a binding site for substrate.

This sequence belongs to the eIF-2B alpha/beta/delta subunits family. MtnA subfamily.

It carries out the reaction 5-(methylsulfanyl)-alpha-D-ribose 1-phosphate = 5-(methylsulfanyl)-D-ribulose 1-phosphate. Its pathway is amino-acid biosynthesis; L-methionine biosynthesis via salvage pathway; L-methionine from S-methyl-5-thio-alpha-D-ribose 1-phosphate: step 1/6. Its function is as follows. Catalyzes the interconversion of methylthioribose-1-phosphate (MTR-1-P) into methylthioribulose-1-phosphate (MTRu-1-P). The sequence is that of Methylthioribose-1-phosphate isomerase from Exiguobacterium sibiricum (strain DSM 17290 / CCUG 55495 / CIP 109462 / JCM 13490 / 255-15).